A 466-amino-acid polypeptide reads, in one-letter code: Ribulose bisphosphate carboxylase large chain (466 aa).

Lys5 carries the post-translational modification N6,N6,N6-trimethyllysine. Asn114 and Thr164 together coordinate substrate. Lys166 acts as the Proton acceptor in catalysis. Residue Lys168 coordinates substrate. Positions 192, 194, and 195 each coordinate Mg(2+). Lys192 carries the post-translational modification N6-carboxylysine. The active-site Proton acceptor is the His285. Residues Arg286, His318, and Ser370 each coordinate substrate.

Belongs to the RuBisCO large chain family. Type I subfamily. In terms of assembly, heterohexadecamer of 8 large chains and 8 small chains; disulfide-linked. The disulfide link is formed within the large subunit homodimers. Mg(2+) serves as cofactor. Post-translationally, the disulfide bond which can form in the large chain dimeric partners within the hexadecamer appears to be associated with oxidative stress and protein turnover.

Its subcellular location is the plastid. It is found in the chloroplast. The catalysed reaction is 2 (2R)-3-phosphoglycerate + 2 H(+) = D-ribulose 1,5-bisphosphate + CO2 + H2O. It catalyses the reaction D-ribulose 1,5-bisphosphate + O2 = 2-phosphoglycolate + (2R)-3-phosphoglycerate + 2 H(+). In terms of biological role, ruBisCO catalyzes two reactions: the carboxylation of D-ribulose 1,5-bisphosphate, the primary event in carbon dioxide fixation, as well as the oxidative fragmentation of the pentose substrate in the photorespiration process. Both reactions occur simultaneously and in competition at the same active site. The sequence is that of Ribulose bisphosphate carboxylase large chain from Oxalis dillenii (Gray-green wood sorrel).